The following is a 916-amino-acid chain: RNA-directed DNA polymerase from mobile element jockey (916 aa).

In terms of domain architecture, Reverse transcriptase spans 483–757 (SILRVGYFPK…HEYKYLGVIL (275 aa)). The disordered stretch occupies residues 890–916 (RSASPRSRVRRRLKRHHPQDLLDRALT). Basic residues predominate over residues 896 to 906 (SRVRRRLKRHH). The segment covering 907–916 (PQDLLDRALT) has biased composition (basic and acidic residues).

It depends on Mg(2+) as a cofactor. Requires Mn(2+) as cofactor.

It catalyses the reaction DNA(n) + a 2'-deoxyribonucleoside 5'-triphosphate = DNA(n+1) + diphosphate. Inactivated by sulphydryl reagent. The chain is RNA-directed DNA polymerase from mobile element jockey (jockey\pol) from Drosophila funebris (Fruit fly).